Reading from the N-terminus, the 397-residue chain is Argininosuccinate synthase (397 aa).

9–17 (AYSGGLDTS) is an ATP binding site. Y87 is an L-citrulline binding site. G117 contacts ATP. Residues T119, N123, and D124 each coordinate L-aspartate. N123 contributes to the L-citrulline binding site. Positions 127, 175, 184, 257, and 269 each coordinate L-citrulline.

This sequence belongs to the argininosuccinate synthase family. Type 1 subfamily. Homotetramer.

The protein resides in the cytoplasm. The catalysed reaction is L-citrulline + L-aspartate + ATP = 2-(N(omega)-L-arginino)succinate + AMP + diphosphate + H(+). It participates in amino-acid biosynthesis; L-arginine biosynthesis; L-arginine from L-ornithine and carbamoyl phosphate: step 2/3. This is Argininosuccinate synthase from Dictyoglomus thermophilum (strain ATCC 35947 / DSM 3960 / H-6-12).